The sequence spans 266 residues: Apolipoprotein A-I (266 aa).

Residues 1–18 form the signal peptide; the sequence is MKAVVLTLAVLFLTGSQA. 2 repeat units span residues 67–88 and 89–110. The 10 X approximate tandem repeats stretch occupies residues 67–266; that stretch reads LKLLDNWDSL…DEATKKLNSQ (200 aa). M109 carries the methionine sulfoxide modification. The stretch at 111–121 is one 3; half-length repeat; the sequence is KDLEEVKKKVQ. A run of 5 repeats spans residues 122–143, 144–165, 166–187, 188–209, and 210–231. The stretch at 232 to 242 is one 9; half-length repeat; it reads PALEDLRQGLL. Repeat unit 10 spans residues 243-266; that stretch reads PVLENFRDSLLAAVDEATKKLNSQ.

The protein belongs to the apolipoprotein A1/A4/E family. Homodimer. Interacts with APOA1BP and CLU. Component of a sperm activating protein complex (SPAP), consisting of APOA1, an immunoglobulin heavy chain, an immunoglobulin light chain and albumin. Interacts with NDRG1. Interacts with SCGB3A2. Interacts with NAXE and YJEFN3. Post-translationally, glycosylated. In terms of processing, palmitoylated. Phosphorylation sites are present in the extracellular medium.

The protein resides in the secreted. Its function is as follows. Participates in the reverse transport of cholesterol from tissues to the liver for excretion by promoting cholesterol efflux from tissues and by acting as a cofactor for the lecithin cholesterol acyltransferase (LCAT). As part of the SPAP complex, activates spermatozoa motility. The chain is Apolipoprotein A-I (APOA1) from Neomonachus schauinslandi (Hawaiian monk seal).